The following is a 149-amino-acid chain: MKVLLIKDVKSLGKAGEIKEVKDGYGNNFLIGKGLAKAATPDVIRQYEAAQKRKEEELKYEISNLEKLKDELSKITLVIKKTLGANGSLFGSVSKEEIAEELEKAHHLIVDKKAIEIDKNHLKAVGLYDVQVKLGHAISATLKVDVQGE.

It belongs to the bacterial ribosomal protein bL9 family.

In terms of biological role, binds to the 23S rRNA. This is Large ribosomal subunit protein bL9 from Campylobacter curvus (strain 525.92).